Consider the following 411-residue polypeptide: Putative acid phosphatase 10 (411 aa).

The active-site Nucleophile is His33. Asp313 (proton donor) is an active-site residue. Cys379 and Cys385 are oxidised to a cystine.

The protein belongs to the histidine acid phosphatase family.

It carries out the reaction a phosphate monoester + H2O = an alcohol + phosphate. This is Putative acid phosphatase 10 (pho-10) from Caenorhabditis elegans.